The primary structure comprises 743 residues: Adhesion defective protein 2 (743 aa).

The interval 1–36 (MADPGLRSGVGLPSQQGQKHDLQKDQKQPHVNNADR) is disordered. Positions 18 to 28 (QKHDLQKDQKQ) are enriched in basic and acidic residues. The 33-residue stretch at 38–70 (TQSLLNSYIYDYLIKKDYCEAARAFGREAQVQT) folds into the LisH domain. Disordered regions lie at residues 79–127 (NSLA…PPPP), 264–361 (LQSV…QYPV), 379–426 (RNPH…YGFS), and 476–692 (KERK…KSSD). Phosphoserine is present on S89. Positions 98 to 114 (ISNNESSDENMNVNNGN) are enriched in polar residues. The segment covering 264–281 (LQSVQQQQKQHQQKKTPQ) has biased composition (low complexity). Composition is skewed to polar residues over residues 282–297 (SGST…QPTT), 315–353 (IPSS…DTTG), 390–399 (PSSTLPQQQK), 408–426 (QQPS…YGFS), and 482–500 (TSAS…SSVA). A compositionally biased stretch (low complexity) spans 501–520 (KTKSTTPKSTDTPTEATTSP). Composition is skewed to polar residues over residues 521 to 544 (VKVS…NMPM) and 556 to 566 (DHPSNYSNLIE). Residues 567–578 (NSSTSDTNNADN) are compositionally biased toward low complexity. The span at 586-602 (WQLQQTHSSRPTPNASS) shows a compositional bias: polar residues. Low complexity predominate over residues 612 to 631 (PSSANSNAPTPAPTVNTTNP). A compositionally biased stretch (polar residues) spans 661–670 (DNQNQSGKSN). Low complexity predominate over residues 671 to 688 (PDTSATPSAPTESTTVAT).

This sequence belongs to the FLO8 family.

The protein resides in the cytoplasm. It is found in the nucleus. Probable transcriptional regulator involved in cell adhesion. This chain is Adhesion defective protein 2 (adn2), found in Schizosaccharomyces pombe (strain 972 / ATCC 24843) (Fission yeast).